The sequence spans 173 residues: Signal peptidase complex catalytic subunit sec11 (173 aa).

Over 1–15 (MLGIADMQPRQLAAQ) the chain is Cytoplasmic. The chain crosses the membrane as a helical; Signal-anchor for type II membrane protein span at residues 16 to 36 (ILNFALVLSTAFMMWKGLSVV). At 37 to 173 (SDSPSPIVVV…MGVMVVLQRE (137 aa)) the chain is on the lumenal side. Catalysis depends on charge relay system residues Ser-50, His-89, and Asp-115. Residues 159-170 (VMLGLMGVMVVL) form a C-terminal short (CTS) helix region.

The protein belongs to the peptidase S26B family. As to quaternary structure, component of the signal peptidase complex (SPC) composed of a catalytic subunit SEC11 and three accessory subunits SPC1, SPC2 and SPC3. The complex induces a local thinning of the ER membrane which is used to measure the length of the signal peptide (SP) h-region of protein substrates. This ensures the selectivity of the complex towards h-regions shorter than 18-20 amino acids. SPC associates with the translocon complex.

The protein localises to the endoplasmic reticulum membrane. The enzyme catalyses Cleavage of hydrophobic, N-terminal signal or leader sequences from secreted and periplasmic proteins.. Its function is as follows. Catalytic component of the signal peptidase complex (SPC) which catalyzes the cleavage of N-terminal signal sequences from nascent proteins as they are translocated into the lumen of the endoplasmic reticulum. Specifically cleaves N-terminal signal peptides that contain a hydrophobic alpha-helix (h-region) shorter than 18-20 amino acids. The polypeptide is Signal peptidase complex catalytic subunit sec11 (sec11) (Pyrenophora tritici-repentis (strain Pt-1C-BFP) (Wheat tan spot fungus)).